The sequence spans 209 residues: UPF0502 protein mll4256 (209 aa).

Belongs to the UPF0502 family.

The sequence is that of UPF0502 protein mll4256 from Mesorhizobium japonicum (strain LMG 29417 / CECT 9101 / MAFF 303099) (Mesorhizobium loti (strain MAFF 303099)).